The chain runs to 566 residues: MFYMTVQEFDVVVVGSGAAGMVAALVAAHRGLSTVVVEKAPHYGGSTARSGGGVWIPNNEVLKRRGVRDTPEAARTYLHGIVGEIVEPERIDAYLDRGPEMLSFVLKHTPLKMCWVPGYSDYYPEAPGGRPGGRSIEPKPFNARKLGADMAGLEPAYGKVPLNVVVMQQDYVRLNQLKRHPRGVLRSMKVGARTMWAKATGKNLVGMGRALIGPLRIGLQRAGVPVELNTAFTDLFVENGVVSGVYVRDSHEAESAEPQLIRARRGVILACGGFEHNEQMRIKYQRAPITTEWTVGASANTGDGILAAEKLGAALDLMDDAWWGPTVPLVGKPWFALSERNSPGSIIVNMSGKRFMNESMPYVEACHHMYGGEHGQGPGPGENIPAWLVFDQRYRDRYIFAGLQPGQRIPSRWLDSGVIVQADTLAELAGKAGLPADELTATVQRFNAFARSGVDEDYHRGESAYDRYYGDPSNKPNPNLGEVGHPPYYGAKMVPGDLGTKGGIRTDVNGRALRDDGSIIDGLYAAGNVSAPVMGHTYPGPGGTIGPAMTFGYLAALHIADQAGKR.

An FAD-binding site is contributed by aspartate 10–lysine 39.

It belongs to the FAD-dependent oxidoreductase 2 family. 3-oxosteroid dehydrogenase subfamily. It depends on FAD as a cofactor.

The enzyme catalyses a 3-oxosteroid + A = a 3-oxo-Delta(1)-steroid + AH2. It catalyses the reaction a 3-oxo-Delta(4)-steroid + A = a 3-oxo-Delta(1,4)-steroid + AH2. Functionally, involved in the degradation of cholesterol. Catalyzes the elimination of the C-1 and C-2 hydrogen atoms of the A-ring from the polycyclic ring structure of 3-ketosteroids. Is also involved in the formation of 3-keto-1,4-diene-steroid from 3-keto-4-ene-steroid. This chain is 3-oxosteroid 1-dehydrogenase (kstD), found in Mycobacterium tuberculosis (strain CDC 1551 / Oshkosh).